Consider the following 333-residue polypeptide: Phosphate acyltransferase (333 aa).

The protein belongs to the PlsX family. In terms of assembly, homodimer. Probably interacts with PlsY.

It localises to the cytoplasm. The enzyme catalyses a fatty acyl-[ACP] + phosphate = an acyl phosphate + holo-[ACP]. It functions in the pathway lipid metabolism; phospholipid metabolism. Catalyzes the reversible formation of acyl-phosphate (acyl-PO(4)) from acyl-[acyl-carrier-protein] (acyl-ACP). This enzyme utilizes acyl-ACP as fatty acyl donor, but not acyl-CoA. The polypeptide is Phosphate acyltransferase (Thermosipho melanesiensis (strain DSM 12029 / CIP 104789 / BI429)).